The sequence spans 264 residues: Phosphatidylglycerol--prolipoprotein diacylglyceryl transferase (264 aa).

3 consecutive transmembrane segments (helical) span residues Leu-17–Ala-37, Leu-59–Tyr-79, and Trp-95–Phe-115. Arg-142 lines the a 1,2-diacyl-sn-glycero-3-phospho-(1'-sn-glycerol) pocket. 2 helical membrane passes run Gly-205–Phe-225 and Met-241–Gly-261.

The protein belongs to the Lgt family.

The protein resides in the cell inner membrane. The enzyme catalyses L-cysteinyl-[prolipoprotein] + a 1,2-diacyl-sn-glycero-3-phospho-(1'-sn-glycerol) = an S-1,2-diacyl-sn-glyceryl-L-cysteinyl-[prolipoprotein] + sn-glycerol 1-phosphate + H(+). The protein operates within protein modification; lipoprotein biosynthesis (diacylglyceryl transfer). Its function is as follows. Catalyzes the transfer of the diacylglyceryl group from phosphatidylglycerol to the sulfhydryl group of the N-terminal cysteine of a prolipoprotein, the first step in the formation of mature lipoproteins. This chain is Phosphatidylglycerol--prolipoprotein diacylglyceryl transferase, found in Methylibium petroleiphilum (strain ATCC BAA-1232 / LMG 22953 / PM1).